The chain runs to 594 residues: Glutamate decarboxylase 1 (594 aa).

Low complexity predominate over residues 1 to 13 (MASSTPSSSATSS). Positions 1–23 (MASSTPSSSATSSNAGADPNTTN) are disordered. The residue at position 78 (Ser-78) is a Phosphoserine. 190–192 (QLS) serves as a coordination point for 4-aminobutanoate. N6-(pyridoxal phosphate)lysine is present on Lys-405. Arg-567 provides a ligand contact to 4-aminobutanoate.

It belongs to the group II decarboxylase family. As to quaternary structure, homodimer. The cofactor is pyridoxal 5'-phosphate.

It carries out the reaction L-glutamate + H(+) = 4-aminobutanoate + CO2. Catalyzes the synthesis of the inhibitory neurotransmitter gamma-aminobutyric acid (GABA) with pyridoxal 5'-phosphate as cofactor. The chain is Glutamate decarboxylase 1 (GAD1) from Bos taurus (Bovine).